We begin with the raw amino-acid sequence, 810 residues long: Venom phosphodiesterase 2 (810 aa).

The N-terminal stretch at 1–23 (MIQQKVLFISLVAVTLGLGLGLG) is a signal peptide. One can recognise an SMB domain in the interval 33–77 (QSWSCSKLRCGEKRIANVLCSCSDDCLEKKDCCTDYKSICKGETS). Intrachain disulfides connect C37–C42, C37–C54, C42–C72, C52–C54, C52–C65, C58–C64, C65–C72, C83–C129, and C91–C303. 2 residues coordinate a divalent metal cation: D106 and T144. Residue T144 is the AMP-threonine intermediate of the active site. 3 N-linked (GlcNAc...) asparagine glycosylation sites follow: N175, N218, and N229. An AMP-binding site is contributed by K230. A divalent metal cation is bound by residues D264, H268, D311, and H312. An AMP-binding site is contributed by H268. 6 disulfides stabilise this stretch: C319–C416, C367–C752, C500–C558, C513–C613, C515–C598, and C721–C731. N364 carries an N-linked (GlcNAc...) asparagine glycan. H421 contacts a divalent metal cation. N-linked (GlcNAc...) asparagine glycans are attached at residues N471, N553, N633, and N704.

Belongs to the nucleotide pyrophosphatase/phosphodiesterase family. As to quaternary structure, monomer cleaved in two subunits; disulfide-linked. Is synthesized as a single-chain protein and is subsequently cleaved to form a two-subunit protein held together with disulfide bonds. The cofactor is a divalent metal cation. In terms of tissue distribution, expressed by venom gland.

It is found in the secreted. It catalyses the reaction ADP + H2O = AMP + phosphate + H(+). In terms of biological role, hydrolyzes ADP with high activity. Shows weak or no activity on 5'-AMP, 5'-GMP, 3'-AMP, ATP, cAMP, and cGMP. Is devoid of monophosphatase and proteinase activities. Dose-dependently inhibits platelet aggregation induced by ADP (IC(50)=0.99 uM) and collagen (IC(50)=1.4 uM). This chain is Venom phosphodiesterase 2, found in Crotalus adamanteus (Eastern diamondback rattlesnake).